A 403-amino-acid polypeptide reads, in one-letter code: Na(+)-translocating NADH-quinone reductase subunit B (403 aa).

The next 3 membrane-spanning stretches (helical) occupy residues Ile56–Gly76, Leu114–Val134, and Leu165–Ala185. Thr231 carries the post-translational modification FMN phosphoryl threonine. The next 5 helical transmembrane spans lie at Gly260–Met280, Ile287–Ser307, Met312–Phe332, Trp348–Phe368, and Gly371–Ala391.

The protein belongs to the NqrB/RnfD family. As to quaternary structure, composed of six subunits; NqrA, NqrB, NqrC, NqrD, NqrE and NqrF. The cofactor is FMN.

The protein resides in the cell inner membrane. The catalysed reaction is a ubiquinone + n Na(+)(in) + NADH + H(+) = a ubiquinol + n Na(+)(out) + NAD(+). Functionally, NQR complex catalyzes the reduction of ubiquinone-1 to ubiquinol by two successive reactions, coupled with the transport of Na(+) ions from the cytoplasm to the periplasm. NqrA to NqrE are probably involved in the second step, the conversion of ubisemiquinone to ubiquinol. The polypeptide is Na(+)-translocating NADH-quinone reductase subunit B (Pseudoalteromonas atlantica (strain T6c / ATCC BAA-1087)).